A 361-amino-acid polypeptide reads, in one-letter code: Chorismate synthase (361 aa).

R47 contributes to the NADP(+) binding site. Residues 124 to 126 (RAS), G286, 301 to 305 (KPTAT), and R327 contribute to the FMN site.

Belongs to the chorismate synthase family. In terms of assembly, homotetramer. The cofactor is FMNH2.

The enzyme catalyses 5-O-(1-carboxyvinyl)-3-phosphoshikimate = chorismate + phosphate. It participates in metabolic intermediate biosynthesis; chorismate biosynthesis; chorismate from D-erythrose 4-phosphate and phosphoenolpyruvate: step 7/7. Functionally, catalyzes the anti-1,4-elimination of the C-3 phosphate and the C-6 proR hydrogen from 5-enolpyruvylshikimate-3-phosphate (EPSP) to yield chorismate, which is the branch point compound that serves as the starting substrate for the three terminal pathways of aromatic amino acid biosynthesis. This reaction introduces a second double bond into the aromatic ring system. The protein is Chorismate synthase of Prochlorococcus marinus (strain NATL1A).